Reading from the N-terminus, the 384-residue chain is Ferrochelatase, mitochondrial (384 aa).

Residue cysteine 156 participates in [2Fe-2S] cluster binding. Active-site residues include histidine 190 and asparagine 343. Residues cysteine 363, cysteine 366, and cysteine 371 each coordinate [2Fe-2S] cluster.

It belongs to the ferrochelatase family. In terms of assembly, homodimer. Homotetramer. Requires [2Fe-2S] cluster as cofactor.

The protein resides in the mitochondrion inner membrane. It carries out the reaction heme b + 2 H(+) = protoporphyrin IX + Fe(2+). Its pathway is porphyrin-containing compound metabolism; protoheme biosynthesis; protoheme from protoporphyrin-IX: step 1/1. Functionally, catalyzes the ferrous insertion into protoporphyrin IX. Terminal enzyme in heme biosynthesis. Contains four conserved cysteines that function as cluster ligands and play a crucial role in maintaining protein structure. This chain is Ferrochelatase, mitochondrial, found in Drosophila melanogaster (Fruit fly).